The sequence spans 505 residues: MQKRIYVSLFFLVFFLSKISVVLSKDDGQRHGEDSDSMNKYNYIYRPNADNGIHNNLRPSSYIDMEHIAKGRDNTSGLRENELFDIQNDENSNMGPDQEKVITLSDKIYIDKIKNIIEYRKWRAKSKYRSPAKQPEEDMFVEGYIPIKRRDDNLLPHEKAEKDFEEIIQKYVDLENKLQKQKELEEAERRKKKLDDEQKRQKDLEDTNRKENDEEQSYKKLEDLELENIDTKINNNDTYDVENGFNDDNKLYTKINKIVSQVSQNNELYVNIMKYITLVYTSHVDIKQDDFTNGSISIFLTFENPKMGNDLANINISFFASEQRTGTNEVAEARSNYLTNYNMNELLEDNASGRLLSQDEYIKELVKYNHSISSSNKENLKNENYDVNMNISKILQYIIDNDINLVDNFITFNRTNEQEVTISKLDDFLHECSKVKPEDIKKDEIQKIIKTINKKEQIIKEVKNSLIKKDIEKCKLYTTILMFGSSIYSSIKYFFLLMLFVIYIL.

Residues 1-24 (MQKRIYVSLFFLVFFLSKISVVLS) form the signal peptide. A disordered region spans residues 188-221 (ERRKKKLDDEQKRQKDLEDTNRKENDEEQSYKKL). The helical transmembrane segment at 485–505 (SSIYSSIKYFFLLMLFVIYIL) threads the bilayer.

In terms of assembly, monomer. May form multimers with an unknown protein(s).

Its subcellular location is the membrane. Functionally, involved in ookinete evasion of the mosquito complement-like response, oocyst maturation, sporozoite development and infectivity. The sequence is that of Ookinete surface protein PIMMS43 from Plasmodium falciparum (isolate 3D7).